We begin with the raw amino-acid sequence, 228 residues long: Cytidylate kinase (228 aa).

17–25 (GPSASGKGT) contacts ATP.

It belongs to the cytidylate kinase family. Type 1 subfamily.

It localises to the cytoplasm. The enzyme catalyses CMP + ATP = CDP + ADP. It catalyses the reaction dCMP + ATP = dCDP + ADP. The protein is Cytidylate kinase of Paraburkholderia phytofirmans (strain DSM 17436 / LMG 22146 / PsJN) (Burkholderia phytofirmans).